We begin with the raw amino-acid sequence, 346 residues long: Small ribosomal subunit biogenesis GTPase RsgA (346 aa).

The disordered stretch occupies residues Met1–His25. Residues Thr7–Lys20 are compositionally biased toward polar residues. A CP-type G domain is found at Glu103–Phe271. GTP contacts are provided by residues Asn159–Asp162 and Gly213–Ser221. Zn(2+) contacts are provided by Cys295, Cys300, His302, and Cys308.

Belongs to the TRAFAC class YlqF/YawG GTPase family. RsgA subfamily. In terms of assembly, monomer. Associates with 30S ribosomal subunit, binds 16S rRNA. Zn(2+) serves as cofactor.

The protein localises to the cytoplasm. In terms of biological role, one of several proteins that assist in the late maturation steps of the functional core of the 30S ribosomal subunit. Helps release RbfA from mature subunits. May play a role in the assembly of ribosomal proteins into the subunit. Circularly permuted GTPase that catalyzes slow GTP hydrolysis, GTPase activity is stimulated by the 30S ribosomal subunit. The protein is Small ribosomal subunit biogenesis GTPase RsgA of Haemophilus influenzae (strain ATCC 51907 / DSM 11121 / KW20 / Rd).